We begin with the raw amino-acid sequence, 496 residues long: Glutamyl-tRNA(Gln) amidotransferase subunit A (496 aa).

Catalysis depends on charge relay system residues Lys-75 and Ser-150. Residue Ser-174 is the Acyl-ester intermediate of the active site.

The protein belongs to the amidase family. GatA subfamily. In terms of assembly, heterotrimer of A, B and C subunits.

The enzyme catalyses L-glutamyl-tRNA(Gln) + L-glutamine + ATP + H2O = L-glutaminyl-tRNA(Gln) + L-glutamate + ADP + phosphate + H(+). Functionally, allows the formation of correctly charged Gln-tRNA(Gln) through the transamidation of misacylated Glu-tRNA(Gln) in organisms which lack glutaminyl-tRNA synthetase. The reaction takes place in the presence of glutamine and ATP through an activated gamma-phospho-Glu-tRNA(Gln). The sequence is that of Glutamyl-tRNA(Gln) amidotransferase subunit A from Burkholderia lata (strain ATCC 17760 / DSM 23089 / LMG 22485 / NCIMB 9086 / R18194 / 383).